Here is a 412-residue protein sequence, read N- to C-terminus: Histidine--tRNA ligase (412 aa).

The protein belongs to the class-II aminoacyl-tRNA synthetase family. As to quaternary structure, homodimer.

The protein localises to the cytoplasm. It catalyses the reaction tRNA(His) + L-histidine + ATP = L-histidyl-tRNA(His) + AMP + diphosphate + H(+). This is Histidine--tRNA ligase from Maridesulfovibrio salexigens (strain ATCC 14822 / DSM 2638 / NCIMB 8403 / VKM B-1763) (Desulfovibrio salexigens).